Reading from the N-terminus, the 437-residue chain is Dihydrofolate synthase/folylpolyglutamate synthase (437 aa).

7,8-dihydropteroate is bound at residue 28-30 (DLG). Position 58 to 61 (58 to 61 (GKGT)) interacts with ATP. Residue Ser82 coordinates Mg(2+). Residue 120 to 123 (TYFE) participates in 7,8-dihydropteroate binding. Glu144 is a Mg(2+) binding site. 151-153 (LDA) provides a ligand contact to 7,8-dihydropteroate. His171 provides a ligand contact to Mg(2+). The ATP site is built by Asn255, Arg287, and Asp316.

This sequence belongs to the folylpolyglutamate synthase family. As to quaternary structure, monomer. Mg(2+) serves as cofactor.

It carries out the reaction 7,8-dihydropteroate + L-glutamate + ATP = 7,8-dihydrofolate + ADP + phosphate + H(+). The enzyme catalyses (6S)-5,6,7,8-tetrahydrofolyl-(gamma-L-Glu)(n) + L-glutamate + ATP = (6S)-5,6,7,8-tetrahydrofolyl-(gamma-L-Glu)(n+1) + ADP + phosphate + H(+). The catalysed reaction is 10-formyltetrahydrofolyl-(gamma-L-Glu)(n) + L-glutamate + ATP = 10-formyltetrahydrofolyl-(gamma-L-Glu)(n+1) + ADP + phosphate + H(+). It catalyses the reaction (6R)-5,10-methylenetetrahydrofolyl-(gamma-L-Glu)(n) + L-glutamate + ATP = (6R)-5,10-methylenetetrahydrofolyl-(gamma-L-Glu)(n+1) + ADP + phosphate + H(+). It participates in cofactor biosynthesis; tetrahydrofolate biosynthesis; 7,8-dihydrofolate from 2-amino-4-hydroxy-6-hydroxymethyl-7,8-dihydropteridine diphosphate and 4-aminobenzoate: step 2/2. Its pathway is cofactor biosynthesis; tetrahydrofolylpolyglutamate biosynthesis. Functions in two distinct reactions of the de novo folate biosynthetic pathway. Catalyzes the addition of a glutamate residue to dihydropteroate (7,8-dihydropteroate or H2Pte) to form dihydrofolate (7,8-dihydrofolate monoglutamate or H2Pte-Glu). Also catalyzes successive additions of L-glutamate to tetrahydrofolate or 10-formyltetrahydrofolate or 5,10-methylenetetrahydrofolate, leading to folylpolyglutamate derivatives. This chain is Dihydrofolate synthase/folylpolyglutamate synthase (folC), found in Haemophilus influenzae (strain ATCC 51907 / DSM 11121 / KW20 / Rd).